A 281-amino-acid chain; its full sequence is Proteasome subunit beta 2 (281 aa).

The propeptide at M1–G53 is removed in mature form; by autocatalysis. Residue T54 is the Nucleophile of the active site.

Belongs to the peptidase T1B family. As to quaternary structure, the 20S proteasome core is composed of 14 alpha and 14 beta subunits that assemble into four stacked heptameric rings, resulting in a barrel-shaped structure. The two inner rings, each composed of seven catalytic beta subunits, are sandwiched by two outer rings, each composed of seven alpha subunits. The catalytic chamber with the active sites is on the inside of the barrel. Has a gated structure, the ends of the cylinder being occluded by the N-termini of the alpha-subunits. Is capped by the proteasome-associated ATPase, ARC.

The protein localises to the cytoplasm. It catalyses the reaction Cleavage of peptide bonds with very broad specificity.. It functions in the pathway protein degradation; proteasomal Pup-dependent pathway. With respect to regulation, the formation of the proteasomal ATPase ARC-20S proteasome complex, likely via the docking of the C-termini of ARC into the intersubunit pockets in the alpha-rings, may trigger opening of the gate for substrate entry. Interconversion between the open-gate and close-gate conformations leads to a dynamic regulation of the 20S proteasome proteolysis activity. Its function is as follows. Component of the proteasome core, a large protease complex with broad specificity involved in protein degradation. The sequence is that of Proteasome subunit beta 2 from Streptomyces avermitilis (strain ATCC 31267 / DSM 46492 / JCM 5070 / NBRC 14893 / NCIMB 12804 / NRRL 8165 / MA-4680).